The chain runs to 316 residues: Serpentine receptor class gamma-8 (316 aa).

7 helical membrane-spanning segments follow: residues F28–V48, P60–T80, L106–T126, F147–I167, I186–I206, A235–L255, and L267–A287.

It belongs to the nematode receptor-like protein srg family.

Its subcellular location is the membrane. The polypeptide is Serpentine receptor class gamma-8 (srg-8) (Caenorhabditis elegans).